The primary structure comprises 278 residues: Achaete-scute homolog 5 (278 aa).

Residues 1 to 66 form a disordered region; the sequence is MPMGAAERGA…GPFGGGLALG (66 aa). In terms of domain architecture, bHLH spans 155-207; sequence AFIQKRNERERQRVKCVNEGYARLRGHLPGALAEKRLSKVETLRAAIRYIKYL. The segment at 214–278 is disordered; sequence APDGSTPPAS…PFLESEESWH (65 aa). Over residues 230-239 the composition is skewed to pro residues; sequence GPCPAPPATP. The span at 240–249 shows a compositional bias: basic and acidic residues; it reads RPDRPGDGEA. A compositionally biased stretch (low complexity) spans 252–271; that stretch reads PSSLVPESSESSCFSPSPFL.

In terms of assembly, interacts with transcription factor TCF3/E12.

Its subcellular location is the nucleus. Transcription factor. Probably binds E-box motifs 5'-CANNTG-3' in complex with transcription factor TCF3/E12. Negatively modulates transcription of target genes such as CDH1/E-cadherin, perhaps by recruiting the PRC2 repressive complex to regulatory elements. Regulates ameloblast development and tooth germ growth, perhaps acting by positively modulating migration of inner enamel epithelium (IEE) cells. Plays a role in enamel formation. The chain is Achaete-scute homolog 5 (ASCL5) from Homo sapiens (Human).